The primary structure comprises 27 residues: Delta-actitoxin-Avd2a (27 aa).

Intrachain disulfides connect Cys3–Cys17, Cys4–Cys11, and Cys6–Cys22.

The protein belongs to the sea anemone short toxin (type III) family.

It localises to the secreted. The protein resides in the nematocyst. Its function is as follows. Specific arthropod (crab and insect) toxin that inhibits inactivation of voltage-gated sodium channels. It competes well with the site-3 toxin LqhalphaIT (from the scorpion L.quinquestriatus (AC P17728)) on binding to cockroach neuronal membranes (Ki=21.4 nM), and inhibits the inactivation of D.melanogaster channel (DmNav1), but not that of mammalian Navs expressed in Xenopus oocytes. Its activity is synergically enhanced by ligands of receptor site-4 (Bj-xtrIT (AC P56637)). Its ability to inhibit the channel mutant DmNav1[D1701R] only decreases 5-fold, whereas the inhibition activity is completely lost by LqhalphaIT and Av2 when tested on DmNav1[D1701R]. This Anemonia sulcata (Mediterranean snakelocks sea anemone) protein is Delta-actitoxin-Avd2a.